The primary structure comprises 2201 residues: Activating signal cointegrator 1 complex subunit 3 (2201 aa).

Phosphoserine is present on serine 12. 2 coiled-coil regions span residues 18-81 (KQDN…KQIV) and 328-356 (IQSE…KAGE). Positions 486-669 (ETAYNTNENM…FLHVNPCIGL (184 aa)) constitute a Helicase ATP-binding 1 domain. 499–506 (APTGAGKT) contacts ATP. Position 572 is an N6-acetyllysine (lysine 572). The DEVH box motif lies at 611–614 (DEVH). In terms of domain architecture, Helicase C-terminal 1 spans 696-914 (QLNNMDEVCY…GTVTNVEEAV (219 aa)). An SEC63 1 domain is found at 978–1287 (STDLGRTASH…GAEAVCIINF (310 aa)). A Helicase ATP-binding 2 domain is found at 1336-1511 (HTLYHTDCNV…WLNIRQMGLF (176 aa)). 1349 to 1356 (APTGSGKT) lines the ATP pocket. The DEIH box signature appears at 1453–1456 (DEIH). Residues 1544–1739 (PTFQAIRSHS…VLSDHLNAEI (196 aa)) form the Helicase C-terminal 2 domain. Residues 1812-2176 (PLTYGRIASY…LGLDQQYDIH (365 aa)) form the SEC63 2 domain.

It belongs to the helicase family. In terms of assembly, identified in the ASCC complex that contains ASCC1, ASCC2 and ASCC3. Functions as a scaffolding subunit that interacts directly with both ASCC1 and ASCC2. Interacts directly with ALKBH3, and thereby recruits ALKBH3 to the ASCC complex. Part of the ASC-1/TRIP4 complex, that contains TRIP4, ASCC1, ASCC2 and ASCC3. Part of the RQT (ribosome quality control trigger) complex, that contains ASCC2, ASCC3 and TRIP4. Associates with ribosomes; recruited to collided ribosomes. Interacts with ZCCHC4. Interacts with ZNF598. Interacts with RPS3.

The protein localises to the nucleus. Its subcellular location is the nucleus speckle. It localises to the cytoplasm. The protein resides in the cytosol. It catalyses the reaction Couples ATP hydrolysis with the unwinding of duplex DNA by translocating in the 3'-5' direction.. It carries out the reaction ATP + H2O = ADP + phosphate + H(+). ATPase involved both in DNA repair and rescue of stalled ribosomes. 3'-5' DNA helicase involved in repair of alkylated DNA: promotes DNA unwinding to generate single-stranded substrate needed for ALKBH3, enabling ALKBH3 to process alkylated N3-methylcytosine (3mC) within double-stranded regions. Also involved in activation of the ribosome quality control (RQC) pathway, a pathway that degrades nascent peptide chains during problematic translation. Drives the splitting of stalled ribosomes that are ubiquitinated in a ZNF598-dependent manner, as part of the ribosome quality control trigger (RQT) complex. Part of the ASC-1 complex that enhances NF-kappa-B, SRF and AP1 transactivation. This is Activating signal cointegrator 1 complex subunit 3 (ascc3) from Bos taurus (Bovine).